The chain runs to 38 residues: Histidine decarboxylase small chain (38 aa).

As to quaternary structure, heterohexamer of 3 large and 3 small chains. Pyruvate serves as cofactor.

The catalysed reaction is L-histidine + H(+) = histamine + CO2. The protein is Histidine decarboxylase small chain of Micrococcus sp.